A 655-amino-acid polypeptide reads, in one-letter code: Epithelial sodium channel subunit alpha (655 aa).

Residues 1 to 55 (MTDKEEEAEGGKKKEPMIGFYDSYQELFEFFCNNTTIHGTIRMVCSKHNNMKTVS) lie on the Cytoplasmic side of the membrane. The chain crosses the membrane as a helical span at residues 56-76 (WTILFITTFGVMYWQFGLLLG). Over 77 to 531 (QYYSYPVSIT…SQWSLWFGSS (455 aa)) the chain is Extracellular. Disulfide bonds link Cys102-Cys275, Cys199-Cys206, Cys252-Cys259, Cys364-Cys448, Cys385-Cys425, Cys385-Cys444, Cys389-Cys440, Cys398-Cys425, Cys398-Cys448, and Cys400-Cys414. The helical transmembrane segment at 532-552 (VLSVVEMGELVFDLIAVGVIV) threads the bilayer. Topologically, residues 553-655 (LRRRRREKCQ…QEASEGPTVL (103 aa)) are cytoplasmic. The disordered stretch occupies residues 561-587 (CQASSDGEGTSDSTAGTHRGQENASRS). The segment covering 562–586 (QASSDGEGTSDSTAGTHRGQENASR) has biased composition (polar residues).

It belongs to the amiloride-sensitive sodium channel (TC 1.A.6) family. SCNN1A subfamily. Heterotrimer; containing an alpha/SCNN1A, a beta/SCNN1B and a gamma/SCNN1G subunit. Strongly expressed in gill, kidney and rectum (at protein level). More weakly expressed in muscle, brain, heart, liver and intestine.

The protein resides in the apical cell membrane. Its subcellular location is the cell projection. It is found in the cilium. The protein localises to the cytoplasmic granule. It localises to the cytoplasm. The protein resides in the cytoplasmic vesicle. Its subcellular location is the secretory vesicle. It is found in the acrosome. The protein localises to the flagellum. The enzyme catalyses Na(+)(in) = Na(+)(out). Originally identified and characterized by its inhibition by the diuretic drug amiloride. In terms of biological role, this is one of the three pore-forming subunits of the heterotrimeric epithelial sodium channel (ENaC), a critical regulator of sodium balance and fluid homeostasis. ENaC operates in epithelial tissues, where it mediates the electrodiffusion of sodium ions from extracellular fluid through the apical membrane of cells, with water following osmotically. The protein is Epithelial sodium channel subunit alpha (scnn1a) of Neoceratodus forsteri (Australian lungfish).